The following is a 341-amino-acid chain: Phenylalanine--tRNA ligase alpha subunit (341 aa).

Position 256 (Glu256) interacts with Mg(2+).

It belongs to the class-II aminoacyl-tRNA synthetase family. Phe-tRNA synthetase alpha subunit type 1 subfamily. As to quaternary structure, tetramer of two alpha and two beta subunits. Mg(2+) serves as cofactor.

The protein localises to the cytoplasm. It carries out the reaction tRNA(Phe) + L-phenylalanine + ATP = L-phenylalanyl-tRNA(Phe) + AMP + diphosphate + H(+). This Clostridium perfringens (strain 13 / Type A) protein is Phenylalanine--tRNA ligase alpha subunit.